The sequence spans 520 residues: Non-specific phospholipase C6 (520 aa).

The N-terminal stretch at 1 to 31 (MKPSSASRFSLTFSHFLTLYCLLTQTHVAQG) is a signal peptide.

It belongs to the bacterial phospholipase C family. As to expression, expressed in roots, leaves, stems, flowers and siliques.

Its subcellular location is the secreted. The sequence is that of Non-specific phospholipase C6 (NPC6) from Arabidopsis thaliana (Mouse-ear cress).